A 491-amino-acid polypeptide reads, in one-letter code: MMMILKPLSSHHVSNFRLSVSFLHSVALSDAKVPVEEEGDDAETVFRMINGSNLQVELKESLSSSGIHLSKDLIDRVLKRVRFSHGNPIQTLEFYRYASAIRGFYHSSFSLDTMLYILGRNRKFDQIWELLIETKRKDRSLISPRTMQVVLGRVAKLCSVRQTVESFWKFKRLVPDFFDTACFNALLRTLCQEKSMTDARNVYHSLKHQFQPDLQTFNILLSGWKSSEEAEAFFEEMKGKGLKPDVVTYNSLIDVYCKDREIEKAYKLIDKMREEEETPDVITYTTVIGGLGLIGQPDKAREVLKEMKEYGCYPDVAAYNAAIRNFCIARRLGDADKLVDEMVKKGLSPNATTYNLFFRVLSLANDLGRSWELYVRMLGNECLPNTQSCMFLIKMFKRHEKVDMAMRLWEDMVVKGFGSYSLVSDVLLDLLCDLAKVEEAEKCLLEMVEKGHRPSNVSFKRIKLLMELANKHDEVNNLIQKMAIFSTEIPR.

PPR repeat units follow at residues 179–209 (DTAC…LKHQ), 210–244 (FQPD…GLKP), 245–279 (DVVT…EETP), 280–314 (DVIT…GCYP), 315–349 (DVAA…GLSP), 350–384 (NATT…ECLP), 385–419 (NTQS…GFGS), and 420–454 (YSLV…GHRP).

This sequence belongs to the PPR family. P subfamily.

The chain is Putative pentatricopeptide repeat-containing protein At1g02420 from Arabidopsis thaliana (Mouse-ear cress).